Here is a 356-residue protein sequence, read N- to C-terminus: Serpentine receptor class epsilon-29 (356 aa).

Transmembrane regions (helical) follow at residues 29-49, 61-81, 119-139, 161-181, 190-210, 251-271, and 281-301; these read IVEL…IYII, ILAI…LITI, LLIF…FGVL, LFIP…TSLA, FLAQ…YFFV, LVFV…ALFY, and FVEN…IFSV.

This sequence belongs to the nematode receptor-like protein sre family.

It is found in the membrane. This is Serpentine receptor class epsilon-29 (sre-29) from Caenorhabditis elegans.